The chain runs to 557 residues: Ribonuclease J 2 (557 aa).

Zn(2+) is bound by residues His76, His78, His144, and Glu166. 366–370 contributes to the substrate binding site; the sequence is HASSH.

The protein belongs to the metallo-beta-lactamase superfamily. RNA-metabolizing metallo-beta-lactamase-like family. Bacterial RNase J subfamily. Homodimer, may be a subunit of the RNA degradosome. Zn(2+) is required as a cofactor.

The protein resides in the cytoplasm. An RNase that has 5'-3' exonuclease and possibly endoonuclease activity. Involved in maturation of rRNA and in some organisms also mRNA maturation and/or decay. In Staphylococcus saprophyticus subsp. saprophyticus (strain ATCC 15305 / DSM 20229 / NCIMB 8711 / NCTC 7292 / S-41), this protein is Ribonuclease J 2.